Reading from the N-terminus, the 406-residue chain is Cysteine desulfurase (406 aa).

An N6-(pyridoxal phosphate)lysine modification is found at Lys-226. The active-site Cysteine persulfide intermediate is Cys-364.

This sequence belongs to the class-V pyridoxal-phosphate-dependent aminotransferase family. Csd subfamily. As to quaternary structure, homodimer. Interacts with SufE and the SufBCD complex composed of SufB, SufC and SufD. The interaction with SufE is required to mediate the direct transfer of the sulfur atom from the S-sulfanylcysteine. Pyridoxal 5'-phosphate is required as a cofactor.

The protein resides in the cytoplasm. It catalyses the reaction (sulfur carrier)-H + L-cysteine = (sulfur carrier)-SH + L-alanine. The enzyme catalyses L-selenocysteine + AH2 = hydrogenselenide + L-alanine + A + H(+). It participates in cofactor biosynthesis; iron-sulfur cluster biosynthesis. Its function is as follows. Cysteine desulfurases mobilize the sulfur from L-cysteine to yield L-alanine, an essential step in sulfur metabolism for biosynthesis of a variety of sulfur-containing biomolecules. Component of the suf operon, which is activated and required under specific conditions such as oxidative stress and iron limitation. Acts as a potent selenocysteine lyase in vitro, that mobilizes selenium from L-selenocysteine. Selenocysteine lyase activity is however unsure in vivo. This chain is Cysteine desulfurase, found in Escherichia coli O7:K1 (strain IAI39 / ExPEC).